The sequence spans 287 residues: MAGAKEIRSKIASVQNTQKITKAMEMVAASKMRKSQDRMAASRPYAETMRKVIGHLANGNLEYKHPYLEERDVKRVGYLVVSTDRGLCGGLNINLFKKLLADMKAWSDKGVQCELAMIGSKGVSFFNSVGGNVVAQVTGMGDNPSLSELIGPVKVMLQAYDEGRLDKLYIVSNKFINTMSQVPTITQLLPLPASEDDDLKRKAWDYLYEPDPKALLDTLLRRYVESQVYQGVVENLASEQAARMVAMKAATDNGGSLIKELQLVYNKARQASITQELTEIVSGAAAV.

This sequence belongs to the ATPase gamma chain family. In terms of assembly, F-type ATPases have 2 components, CF(1) - the catalytic core - and CF(0) - the membrane proton channel. CF(1) has five subunits: alpha(3), beta(3), gamma(1), delta(1), epsilon(1). CF(0) has three main subunits: a, b and c.

It is found in the cell inner membrane. Its function is as follows. Produces ATP from ADP in the presence of a proton gradient across the membrane. The gamma chain is believed to be important in regulating ATPase activity and the flow of protons through the CF(0) complex. The chain is ATP synthase gamma chain from Salmonella agona (strain SL483).